A 556-amino-acid chain; its full sequence is Glutamine--tRNA ligase (556 aa).

Residues 39 to 49 (PEPNGYLHIGH) carry the 'HIGH' region motif. Residues 40 to 42 (EPN) and 46 to 52 (HIGHAKS) contribute to the ATP site. Residues aspartate 72 and tyrosine 217 each contribute to the L-glutamine site. ATP contacts are provided by residues threonine 236 and 267–268 (RL). Positions 274-278 (LTSKR) match the 'KMSKS' region motif.

Belongs to the class-I aminoacyl-tRNA synthetase family. Monomer.

The protein resides in the cytoplasm. It catalyses the reaction tRNA(Gln) + L-glutamine + ATP = L-glutaminyl-tRNA(Gln) + AMP + diphosphate. The chain is Glutamine--tRNA ligase from Haemophilus ducreyi (strain 35000HP / ATCC 700724).